Consider the following 265-residue polypeptide: Gamma-secretase subunit APH-1A (265 aa).

Topologically, residues 1-2 are lumenal; it reads MG. A helical membrane pass occupies residues 3–23; it reads AAVFFGCTFVAFGPAFALFLI. Residues 24 to 31 lie on the Cytoplasmic side of the membrane; that stretch reads TVAGDPLR. The helical transmembrane segment at 32-52 threads the bilayer; sequence VIILVAGAFFWLVSLLLASVV. Residues 53-68 are Lumenal-facing; sequence WFILVHVTDRSDARLQ. A helical membrane pass occupies residues 69 to 89; sequence YGLLIFGAAVSVLLQEVFRFA. The Cytoplasmic portion of the chain corresponds to 90-118; it reads YYKLLKKADEGLASLSEDGRSPISIRQMA. Residues 119–139 traverse the membrane as a helical segment; it reads YVSGLSFGIISGVFSVINILA. Residues 140-158 lie on the Lumenal side of the membrane; it reads DALGPGVVGIHGDSPYYFL. Residues 159–179 traverse the membrane as a helical segment; sequence TSAFLTAAIILLHTFWGVVFF. At 180–186 the chain is on the cytoplasmic side; the sequence is DACERRR. Residues 187 to 207 traverse the membrane as a helical segment; it reads YWALGLVVGSHLLTSGLTFLN. Topologically, residues 208 to 213 are lumenal; the sequence is PWYEAS. Residues 214–234 form a helical membrane-spanning segment; that stretch reads LLPIYAVTVSMGLWAFITAGG. Over 235 to 265 the chain is Cytoplasmic; the sequence is SLRSIQRSLLCRRQEDSRVMVYSALRIPPED.

It belongs to the APH-1 family. As to quaternary structure, the functional gamma-secretase complex is composed of at least four polypeptides: a presenilin homodimer (PSEN1 or PSEN2), nicastrin (NCSTN), APH1 (APH1A or APH1B) and PSENEN/PEN2. In terms of tissue distribution, widely expressed. Expressed in leukocytes, lung, placenta, small intestine, liver, kidney, spleen thymus, skeletal muscle, heart and brain. Isoform 1 and isoform 2 are nearly expressed at the same level.

The protein resides in the endoplasmic reticulum membrane. It is found in the golgi apparatus. The protein localises to the golgi stack membrane. Non-catalytic subunit of the gamma-secretase complex, an endoprotease complex that catalyzes the intramembrane cleavage of integral membrane proteins such as Notch receptors and APP (amyloid-beta precursor protein). Required for normal gamma-secretase assembly. The gamma-secretase complex plays a role in Notch and Wnt signaling cascades and regulation of downstream processes via its role in processing key regulatory proteins, and by regulating cytosolic CTNNB1 levels. This chain is Gamma-secretase subunit APH-1A (APH1A), found in Homo sapiens (Human).